A 295-amino-acid chain; its full sequence is UDP-N-acetylenolpyruvoylglucosamine reductase (295 aa).

One can recognise an FAD-binding PCMH-type domain in the interval 26 to 189; the sequence is VGGQADILFK…IEAEFKGVSS (164 aa). R169 is an active-site residue. The active-site Proton donor is the C218. The active site involves E288.

This sequence belongs to the MurB family. FAD serves as cofactor.

It is found in the cytoplasm. The catalysed reaction is UDP-N-acetyl-alpha-D-muramate + NADP(+) = UDP-N-acetyl-3-O-(1-carboxyvinyl)-alpha-D-glucosamine + NADPH + H(+). Its pathway is cell wall biogenesis; peptidoglycan biosynthesis. Its function is as follows. Cell wall formation. The sequence is that of UDP-N-acetylenolpyruvoylglucosamine reductase from Wolbachia sp. subsp. Brugia malayi (strain TRS).